We begin with the raw amino-acid sequence, 512 residues long: Maturase K (512 aa).

Belongs to the intron maturase 2 family. MatK subfamily.

The protein resides in the plastid. It is found in the chloroplast. Usually encoded in the trnK tRNA gene intron. Probably assists in splicing its own and other chloroplast group II introns. The protein is Maturase K of Acer platanoides (Norway maple).